Here is a 224-residue protein sequence, read N- to C-terminus: Ion-translocating oxidoreductase complex subunit E (224 aa).

5 consecutive transmembrane segments (helical) span residues 51–71 (LGLG…VSLF), 81–101 (IPIY…LMNA), 105–125 (SLYQ…IVIG), 140–160 (MFDG…LGAI), and 194–214 (HFLL…ILAI).

This sequence belongs to the NqrDE/RnfAE family. The complex is composed of six subunits: RnfA, RnfB, RnfC, RnfD, RnfE and RnfG.

It is found in the cell inner membrane. Its function is as follows. Part of a membrane-bound complex that couples electron transfer with translocation of ions across the membrane. The polypeptide is Ion-translocating oxidoreductase complex subunit E (Pasteurella multocida (strain Pm70)).